We begin with the raw amino-acid sequence, 365 residues long: Mannonate dehydratase 1 (365 aa).

The protein belongs to the mannonate dehydratase family. It depends on Fe(2+) as a cofactor. Requires Mn(2+) as cofactor.

The catalysed reaction is D-mannonate = 2-dehydro-3-deoxy-D-gluconate + H2O. It participates in carbohydrate metabolism; pentose and glucuronate interconversion. Its function is as follows. Catalyzes the dehydration of D-mannonate. This is Mannonate dehydratase 1 from Bacillus licheniformis (strain ATCC 14580 / DSM 13 / JCM 2505 / CCUG 7422 / NBRC 12200 / NCIMB 9375 / NCTC 10341 / NRRL NRS-1264 / Gibson 46).